Consider the following 107-residue polypeptide: Thioredoxin (107 aa).

The Thioredoxin domain occupies 2–107 (VVHIENLNAF…TLKQKINDHK (106 aa)). Residues Cys32 and Cys35 each act as nucleophile in the active site. Residues Cys32 and Cys35 are joined by a disulfide bond. S-nitrosocysteine occurs at positions 71 and 75.

The protein belongs to the thioredoxin family. In terms of processing, may be nitrosylated on several cysteine residues, depending on the oxidation state. Nitrosylated Cys-75 may serve as donor for nitrosylation of target proteins.

It is found in the nucleus. The protein resides in the cytoplasm. It localises to the secreted. Participates in various redox reactions through the reversible oxidation of its active center dithiol to a disulfide and catalyzes dithiol-disulfide exchange reactions. Plays a role in the reversible S-nitrosylation of cysteine residues in target proteins, and thereby contributes to the response to intracellular nitric oxide. Nitrosylates the active site Cys of CASP3 in response to nitric oxide (NO), and thereby inhibits caspase-3 activity. Induces the FOS/JUN AP-1 DNA binding activity in ionizing radiation (IR) cells through its oxidation/reduction status and stimulates AP-1 transcriptional activity. The polypeptide is Thioredoxin (txn) (Ictalurus punctatus (Channel catfish)).